The primary structure comprises 69 residues: uncharacterized protein (69 aa).

This is an uncharacterized protein from Homo sapiens (Human).